We begin with the raw amino-acid sequence, 432 residues long: Protein arginine N-methyltransferase 2 (432 aa).

A compositionally biased stretch (low complexity) spans 1-11 (MESSSECSSIS). The interval 1-22 (MESSSECSSISDFQDSTEGDDA) is disordered. An SH3 domain is found at 29–88 (LCMREYVVICDYVATDNTQLSLCSGDKVLLLNAVSQDWWWVNHNGTCGYVPASHLHDALN). Residues 101–405 (DEEYYGSYKT…FERNSVWRRH (305 aa)) enclose the SAM-dependent MTase PRMT-type domain. S-adenosyl-L-methionine is bound by residues histidine 114, arginine 123, glycine 147, glutamate 170, and glutamate 199. Catalysis depends on residues glutamate 213 and glutamate 222.

Belongs to the class I-like SAM-binding methyltransferase superfamily. Protein arginine N-methyltransferase family. Interacts with ctnnb1.

The protein localises to the cytoplasm. The protein resides in the nucleus. It catalyses the reaction L-arginyl-[protein] + 2 S-adenosyl-L-methionine = N(omega),N(omega)-dimethyl-L-arginyl-[protein] + 2 S-adenosyl-L-homocysteine + 2 H(+). In terms of biological role, arginine methyltransferase that methylates the guanidino nitrogens of arginyl residues in proteins such as histones. Involved in growth regulation. Involved in embryonic dorsal development. In Xenopus laevis (African clawed frog), this protein is Protein arginine N-methyltransferase 2 (prmt2).